Here is a 714-residue protein sequence, read N- to C-terminus: Putative glutamine--fructose-6-phosphate aminotransferase [isomerizing] (714 aa).

Cys2 acts as the Nucleophile; for GATase activity in catalysis. In terms of domain architecture, Glutamine amidotransferase type-2 spans 2–321 (CGIFGYCNFL…DNDIAHIYDG (320 aa)). A compositionally biased stretch (polar residues) spans 266–280 (STTSTFNHGSSTETP). A disordered region spans residues 266–285 (STTSTFNHGSSTETPAENGL). SIS domains lie at 387 to 526 (WLTE…DLVS) and 559 to 704 (CDKK…VDLP).

It carries out the reaction D-fructose 6-phosphate + L-glutamine = D-glucosamine 6-phosphate + L-glutamate. Its pathway is nucleotide-sugar biosynthesis; UDP-N-acetyl-alpha-D-glucosamine biosynthesis; alpha-D-glucosamine 6-phosphate from D-fructose 6-phosphate: step 1/1. Its function is as follows. Involved in amino sugar synthesis (formation of chitin, supplies the amino sugars of asparagine-linked oligosaccharides of glycoproteins). The chain is Putative glutamine--fructose-6-phosphate aminotransferase [isomerizing] from Saccharomyces cerevisiae (strain YJM789) (Baker's yeast).